Reading from the N-terminus, the 126-residue chain is Major sperm protein 2 (126 aa).

A2 is subject to N-acetylalanine. The MSP domain occupies 8 to 125 (DIATMPNQKV…RRKNLPIEYN (118 aa)).

As to expression, sperm.

Its subcellular location is the cell projection. The protein localises to the pseudopodium. It is found in the cytoplasm. The protein resides in the cytoskeleton. In terms of biological role, central component in molecular interactions underlying sperm crawling. Forms an extensive filament system that extends from sperm villipoda, along the leading edge of the pseudopod. In Globodera rostochiensis (Golden nematode worm), this protein is Major sperm protein 2 (MSP-2).